Consider the following 297-residue polypeptide: F-actin-capping protein subunit beta (297 aa).

Residues 276-289 are compositionally biased toward basic and acidic residues; the sequence is DLSGKESDDKRQSE. The segment at 276 to 297 is disordered; it reads DLSGKESDDKRQSELVKGLQSL.

This sequence belongs to the F-actin-capping protein beta subunit family. As to quaternary structure, component of the F-actin capping complex, composed of a heterodimer of an alpha and a beta subunit.

It is found in the cytoplasm. The protein localises to the cytoskeleton. Its subcellular location is the actin patch. Functionally, F-actin-capping proteins bind in a Ca(2+)-independent manner to the fast growing ends of actin filaments (barbed end) thereby blocking the exchange of subunits at these ends. Unlike other capping proteins (such as gelsolin and severin), these proteins do not sever actin filaments. This Debaryomyces hansenii (strain ATCC 36239 / CBS 767 / BCRC 21394 / JCM 1990 / NBRC 0083 / IGC 2968) (Yeast) protein is F-actin-capping protein subunit beta (CAP2).